The following is a 138-amino-acid chain: Histone H2AX (138 aa).

Positions Met1–Ser23 are disordered. At Ser2 the chain carries N-acetylserine. Lys6, Lys9, Lys11, Lys13, and Lys18 each carry N6-acetyllysine. Ser123 carries the phosphoserine modification. Lys124 is covalently cross-linked (Glycyl lysine isopeptide (Lys-Gly) (interchain with G-Cter in ubiquitin)). 3 positions are modified to phosphoserine: Ser125, Ser130, and Ser135. A [ST]-Q motif motif is present at residues Ser135–Gln136.

This sequence belongs to the histone H2A family. The nucleosome is a histone octamer containing two molecules each of H2A, H2B, H3 and H4 assembled in one H3-H4 heterotetramer and two H2A-H2B heterodimers. The octamer wraps approximately 147 bp of DNA. Monoubiquitination of Lys-124 gives a specific tag for epigenetic transcriptional repression. In terms of processing, phosphorylated to form H2AX134ph (gamma-H2AX) in response to DNA double-strand breaks (DSBs) generated by exogenous genotoxic agents in both the mitotic MIC and the amitotic MAC. Gamma-H2AX is also found when programmed DNA rearrangements occur, namely homologous recombination in the MIC during prophase of meiosis, and chromosome fragmentation and DNA elimination in developing MACs. Gamma-H2AX is important to recover from exogenous DNA damage and to repair breaks associated with normal micronuclear meiosis and mitosis and macronuclear amitotic division. Post-translationally, acetylation occurs almost exclusively in the MAC.

It is found in the nucleus. Its subcellular location is the chromosome. Functionally, core component of nucleosome which plays a central role in DNA double strand break (DSB) repair. Nucleosomes wrap and compact DNA into chromatin, limiting DNA accessibility to the cellular machineries which require DNA as a template. Histones thereby play a central role in transcription regulation, DNA repair, DNA replication and chromosomal stability. DNA accessibility is regulated via a complex set of post-translational modifications of histones, also called histone code, and nucleosome remodeling. This chain is Histone H2AX (HTA1), found in Tetrahymena thermophila (strain SB210).